We begin with the raw amino-acid sequence, 265 residues long: Small ribosomal subunit protein uS2 (265 aa).

It belongs to the universal ribosomal protein uS2 family.

The protein is Small ribosomal subunit protein uS2 of Microcystis aeruginosa (strain NIES-843 / IAM M-2473).